We begin with the raw amino-acid sequence, 471 residues long: Putative multidrug resistance protein MdtD (471 aa).

13 consecutive transmembrane segments (helical) span residues 12–32, 49–69, 77–97, 102–124, 138–158, 165–185, 197–217, 222–242, 263–283, 286–306, 342–362, 396–416, and 431–451; these read LWIV…VNTA, MVVV…GWLA, IFFT…WSST, VLAR…LTVM, FVTL…GILV, WIFL…LMLM, LSGF…LDGS, LSPL…ALYL, FSLG…LPFM, VFLQ…MIPM, LLFM…VLFL, MIMQ…LGMF, and VFMY…LIFA.

This sequence belongs to the major facilitator superfamily. TCR/Tet family.

The protein localises to the cell inner membrane. This is Putative multidrug resistance protein MdtD from Citrobacter koseri (strain ATCC BAA-895 / CDC 4225-83 / SGSC4696).